A 379-amino-acid polypeptide reads, in one-letter code: Putative beta-glucosidase 6 (379 aa).

Positions Met-1–Cys-20 are cleaved as a signal peptide. Residues Gln-43, His-141, and Asn-186–Glu-187 contribute to the a beta-D-glucoside site. Catalysis depends on Glu-187, which acts as the Proton donor. Cys-206 and Cys-213 are joined by a disulfide. N-linked (GlcNAc...) asparagine glycosylation occurs at Asn-217. Residue Tyr-329 participates in a beta-D-glucoside binding. Asn-362 is a glycosylation site (N-linked (GlcNAc...) asparagine).

The protein belongs to the glycosyl hydrolase 1 family.

The enzyme catalyses Hydrolysis of terminal, non-reducing beta-D-glucosyl residues with release of beta-D-glucose.. The chain is Putative beta-glucosidase 6 from Arabidopsis thaliana (Mouse-ear cress).